The chain runs to 642 residues: Threonine--tRNA ligase (642 aa).

In terms of domain architecture, TGS spans 1–61 (MPVITLPDGS…ENDATLSIIT (61 aa)). The interval 243–534 (DHRKIGKQLD…LTEEFAGFFP (292 aa)) is catalytic. Zn(2+) contacts are provided by Cys-334, His-385, and His-511.

The protein belongs to the class-II aminoacyl-tRNA synthetase family. Homodimer. Requires Zn(2+) as cofactor.

It is found in the cytoplasm. It catalyses the reaction tRNA(Thr) + L-threonine + ATP = L-threonyl-tRNA(Thr) + AMP + diphosphate + H(+). Its function is as follows. Catalyzes the attachment of threonine to tRNA(Thr) in a two-step reaction: L-threonine is first activated by ATP to form Thr-AMP and then transferred to the acceptor end of tRNA(Thr). Also edits incorrectly charged L-seryl-tRNA(Thr). This chain is Threonine--tRNA ligase, found in Salmonella heidelberg (strain SL476).